The sequence spans 346 residues: Holliday junction branch migration complex subunit RuvB (346 aa).

The large ATPase domain (RuvB-L) stretch occupies residues 4–185 (SDRIITASPF…FGIVSRLEFY (182 aa)). Residues Leu-24, Arg-25, Gly-66, Lys-69, Thr-70, Thr-71, 132–134 (EDY), Arg-175, Tyr-185, and Arg-222 contribute to the ATP site. Position 70 (Thr-70) interacts with Mg(2+). The small ATPAse domain (RuvB-S) stretch occupies residues 186 to 256 (TSDELSKIVT…VADAALQMLD (71 aa)). Residues 259–346 (AAGLDVLDRK…AATPGLFNPD (88 aa)) are head domain (RuvB-H). Residues Arg-295, Arg-314, and Arg-319 each coordinate DNA.

It belongs to the RuvB family. In terms of assembly, homohexamer. Forms an RuvA(8)-RuvB(12)-Holliday junction (HJ) complex. HJ DNA is sandwiched between 2 RuvA tetramers; dsDNA enters through RuvA and exits via RuvB. An RuvB hexamer assembles on each DNA strand where it exits the tetramer. Each RuvB hexamer is contacted by two RuvA subunits (via domain III) on 2 adjacent RuvB subunits; this complex drives branch migration. In the full resolvosome a probable DNA-RuvA(4)-RuvB(12)-RuvC(2) complex forms which resolves the HJ.

It is found in the cytoplasm. It carries out the reaction ATP + H2O = ADP + phosphate + H(+). The RuvA-RuvB-RuvC complex processes Holliday junction (HJ) DNA during genetic recombination and DNA repair, while the RuvA-RuvB complex plays an important role in the rescue of blocked DNA replication forks via replication fork reversal (RFR). RuvA specifically binds to HJ cruciform DNA, conferring on it an open structure. The RuvB hexamer acts as an ATP-dependent pump, pulling dsDNA into and through the RuvAB complex. RuvB forms 2 homohexamers on either side of HJ DNA bound by 1 or 2 RuvA tetramers; 4 subunits per hexamer contact DNA at a time. Coordinated motions by a converter formed by DNA-disengaged RuvB subunits stimulates ATP hydrolysis and nucleotide exchange. Immobilization of the converter enables RuvB to convert the ATP-contained energy into a lever motion, pulling 2 nucleotides of DNA out of the RuvA tetramer per ATP hydrolyzed, thus driving DNA branch migration. The RuvB motors rotate together with the DNA substrate, which together with the progressing nucleotide cycle form the mechanistic basis for DNA recombination by continuous HJ branch migration. Branch migration allows RuvC to scan DNA until it finds its consensus sequence, where it cleaves and resolves cruciform DNA. This Nitrosomonas eutropha (strain DSM 101675 / C91 / Nm57) protein is Holliday junction branch migration complex subunit RuvB.